The chain runs to 284 residues: MPTYALLGATGATGSAILRCLLASPPPDLDLNILVRSKQKLLKSFPTLTTTISPRIHIIQGNSTDTIALQQCLEDASVAFMCVADNASNKGVSLTADTVTAIVTTLGMLRKLHGSAYNAPTILQLRSASLNPKLSCQVPRLVYNIVSFCLHYSHLDIVKACEHYEAAAAKGLLSYIYVDPPTIHDAFGPNRTGHKLISCKPDVCDKQETALSYADLGAGFVEIASRKEDFLNQPVGVTATGKAKETWGVLAGFLFDGAKGRARAWWEEERPMSKPQNLFLYCGM.

The N-terminal stretch at 1 to 23 (MPTYALLGATGATGSAILRCLLA) is a signal peptide. 3 N-linked (GlcNAc...) asparagine glycosylation sites follow: Asn-62, Asn-86, and Asn-190.

Belongs to the avfA family.

It participates in mycotoxin biosynthesis. Averufin oxidase A; part of the fragmented gene cluster that mediates the biosynthesis of dothistromin (DOTH), a polyketide toxin very similar in structure to the aflatoxin precursor, versicolorin B. The first step of the pathway is the conversion of acetate to norsolorinic acid (NOR) and requires the fatty acid synthase subunits hexA and hexB, as well as the polyketide synthase pksA. PksA combines a hexanoyl starter unit and 7 malonyl-CoA extender units to synthesize the precursor NOR. The hexanoyl starter unit is provided to the acyl-carrier protein (ACP) domain by the fungal fatty acid synthase hexA/hexB. The second step is the conversion of NOR to averantin (AVN) and requires the norsolorinic acid ketoreductase nor1, which catalyzes the dehydration of norsolorinic acid to form (1'S)-averantin. The cytochrome P450 monooxygenase avnA then catalyzes the hydroxylation of AVN to 5'hydroxyaverantin (HAVN). The next step is performed by adhA that transforms HAVN to averufin (AVF). Averufin might then be converted to hydroxyversicolorone by cypX and avfA. Hydroxyversicolorone is further converted versiconal hemiacetal acetate (VHA) by moxY. VHA is then the substrate for the versiconal hemiacetal acetate esterase est1 to yield versiconal (VAL). Versicolorin B synthase vbsA then converts VAL to versicolorin B (VERB) by closing the bisfuran ring. Then, the activity of the versicolorin B desaturase verB leads to versicolorin A (VERA). DotB, a predicted chloroperoxidase, may perform epoxidation of the A-ring of VERA. Alternatively, a cytochrome P450, such as cypX or avnA could catalyze this step. It is also possible that another, uncharacterized, cytochrome P450 enzyme is responsible for this step. Opening of the epoxide could potentially be achieved by the epoxide hydrolase epoA. However, epoA seems not to be required for DOTH biosynthesis, but other epoxide hydrolases may have the ability to complement this hydrolysis. Alternatively, opening of the epoxide ring could be achieved non-enzymatically. The next step is the deoxygenation of ring A to yield the 5,8-dihydroxyanthraquinone which is most likely catalyzed by the NADPH dehydrogenase encoded by ver1. The last stages of DOTH biosynthesis are proposed to involve hydroxylation of the bisfuran. OrdB and norB might have oxidative roles here. An alternative possibility is that cytochrome P450 monoogenases such as avnA and cypX might perform these steps in addition to previously proposed steps. The sequence is that of Averufin oxidase A from Dothistroma septosporum (strain NZE10 / CBS 128990) (Red band needle blight fungus).